The chain runs to 195 residues: Probable thymidylate kinase (195 aa).

Position 7–14 (7–14 (GIDGVGKT)) interacts with ATP.

It belongs to the thymidylate kinase family.

It carries out the reaction dTMP + ATP = dTDP + ADP. In Methanosphaera stadtmanae (strain ATCC 43021 / DSM 3091 / JCM 11832 / MCB-3), this protein is Probable thymidylate kinase.